The sequence spans 511 residues: ATP synthase subunit alpha (511 aa).

169 to 176 (GDRQTGKT) lines the ATP pocket.

Belongs to the ATPase alpha/beta chains family. As to quaternary structure, F-type ATPases have 2 components, CF(1) - the catalytic core - and CF(0) - the membrane proton channel. CF(1) has five subunits: alpha(3), beta(3), gamma(1), delta(1), epsilon(1). CF(0) has three main subunits: a(1), b(2) and c(9-12). The alpha and beta chains form an alternating ring which encloses part of the gamma chain. CF(1) is attached to CF(0) by a central stalk formed by the gamma and epsilon chains, while a peripheral stalk is formed by the delta and b chains.

Its subcellular location is the cell inner membrane. The enzyme catalyses ATP + H2O + 4 H(+)(in) = ADP + phosphate + 5 H(+)(out). Its function is as follows. Produces ATP from ADP in the presence of a proton gradient across the membrane. The alpha chain is a regulatory subunit. This chain is ATP synthase subunit alpha, found in Bartonella bacilliformis (strain ATCC 35685 / KC583 / Herrer 020/F12,63).